The chain runs to 170 residues: ATP synthase subunit b (170 aa).

Residues 15–37 (FNLFETNILNWAVVVFGLYKFLP) form a helical membrane-spanning segment.

Belongs to the ATPase B chain family. F-type ATPases have 2 components, F(1) - the catalytic core - and F(0) - the membrane proton channel. F(1) has five subunits: alpha(3), beta(3), gamma(1), delta(1), epsilon(1). F(0) has four main subunits: a(1), b(1), b'(1) and c(10-14). The alpha and beta chains form an alternating ring which encloses part of the gamma chain. F(1) is attached to F(0) by a central stalk formed by the gamma and epsilon chains, while a peripheral stalk is formed by the delta, b and b' chains.

The protein localises to the cellular thylakoid membrane. In terms of biological role, f(1)F(0) ATP synthase produces ATP from ADP in the presence of a proton or sodium gradient. F-type ATPases consist of two structural domains, F(1) containing the extramembraneous catalytic core and F(0) containing the membrane proton channel, linked together by a central stalk and a peripheral stalk. During catalysis, ATP synthesis in the catalytic domain of F(1) is coupled via a rotary mechanism of the central stalk subunits to proton translocation. Functionally, component of the F(0) channel, it forms part of the peripheral stalk, linking F(1) to F(0). The sequence is that of ATP synthase subunit b from Prochlorococcus marinus (strain MIT 9312).